The following is a 169-amino-acid chain: Large ribosomal subunit protein uL5 (169 aa).

This sequence belongs to the universal ribosomal protein uL5 family. Part of the 50S ribosomal subunit; contacts the 5S rRNA and probably tRNA. Forms a bridge to the 30S subunit in the 70S ribosome.

Functionally, this is one of the proteins that bind and probably mediate the attachment of the 5S RNA into the large ribosomal subunit, where it forms part of the central protuberance. In the 70S ribosome it contacts protein S13 of the 30S subunit (bridge B1b), connecting the 2 subunits; this bridge is implicated in subunit movement. May contact the P site tRNA; the 5S rRNA and some of its associated proteins might help stabilize positioning of ribosome-bound tRNAs. This is Large ribosomal subunit protein uL5 from Methanosarcina barkeri (strain Fusaro / DSM 804).